The following is a 43-amino-acid chain: Potassium channel toxin gamma-KTx 3.2 (43 aa).

Intrachain disulfides connect Cys-5–Cys-23, Cys-11–Cys-34, Cys-20–Cys-39, and Cys-24–Cys-41.

Belongs to the ergtoxin family. Gamma-KTx 3 subfamily. As to expression, expressed by the venom gland.

The protein localises to the secreted. Its function is as follows. Blocks Kv11/ERG potassium channels. The sequence is that of Potassium channel toxin gamma-KTx 3.2 from Centruroides elegans (Bark scorpion).